A 201-amino-acid chain; its full sequence is Recombination protein RecR (201 aa).

The C4-type zinc finger occupies 60–75 (CRRCGNVDVCDPCTIC). The Toprim domain occupies 83–178 (RTLVVVADVG…RVTRLAQGVP (96 aa)).

It belongs to the RecR family.

Functionally, may play a role in DNA repair. It seems to be involved in an RecBC-independent recombinational process of DNA repair. It may act with RecF and RecO. The polypeptide is Recombination protein RecR (Xanthobacter autotrophicus (strain ATCC BAA-1158 / Py2)).